We begin with the raw amino-acid sequence, 590 residues long: Aspartate--tRNA(Asp/Asn) ligase (590 aa).

Glu-170 contributes to the L-aspartate binding site. The tract at residues 194-197 is aspartate; that stretch reads QLFK. Residue Arg-216 coordinates L-aspartate. Residues 216–218 and Gln-225 each bind ATP; that span reads RDE. His-448 serves as a coordination point for L-aspartate. Glu-482 contacts ATP. Arg-489 is a binding site for L-aspartate. An ATP-binding site is contributed by 534-537; the sequence is GWDR. The tract at residues 557-590 is disordered; the sequence is SGGGADPLTGAPAPITPQQRRESGIDAKPKKDGE. Residues 575 to 590 show a composition bias toward basic and acidic residues; it reads QRRESGIDAKPKKDGE.

It belongs to the class-II aminoacyl-tRNA synthetase family. Type 1 subfamily. In terms of assembly, homodimer.

It localises to the cytoplasm. It carries out the reaction tRNA(Asx) + L-aspartate + ATP = L-aspartyl-tRNA(Asx) + AMP + diphosphate. Its function is as follows. Aspartyl-tRNA synthetase with relaxed tRNA specificity since it is able to aspartylate not only its cognate tRNA(Asp) but also tRNA(Asn). Reaction proceeds in two steps: L-aspartate is first activated by ATP to form Asp-AMP and then transferred to the acceptor end of tRNA(Asp/Asn). In Mycobacterium sp. (strain JLS), this protein is Aspartate--tRNA(Asp/Asn) ligase.